A 149-amino-acid chain; its full sequence is Probable methylated-DNA--protein-cysteine methyltransferase (149 aa).

Residue Cys118 is the Alkyl group acceptor of the active site.

The protein belongs to the MGMT family.

The enzyme catalyses a 6-O-methyl-2'-deoxyguanosine in DNA + L-cysteinyl-[protein] = S-methyl-L-cysteinyl-[protein] + a 2'-deoxyguanosine in DNA. It carries out the reaction a 4-O-methyl-thymidine in DNA + L-cysteinyl-[protein] = a thymidine in DNA + S-methyl-L-cysteinyl-[protein]. This is Probable methylated-DNA--protein-cysteine methyltransferase (MGMT) from Acanthamoeba polyphaga (Amoeba).